Here is a 414-residue protein sequence, read N- to C-terminus: Imidazolonepropionase (414 aa).

Fe(3+) contacts are provided by His-73 and His-75. Zn(2+) contacts are provided by His-73 and His-75. The 4-imidazolone-5-propanoate site is built by Arg-82, Tyr-145, and His-178. Residue Tyr-145 coordinates N-formimidoyl-L-glutamate. Residue His-249 participates in Fe(3+) binding. A Zn(2+)-binding site is contributed by His-249. Position 252 (Gln-252) interacts with 4-imidazolone-5-propanoate. Position 324 (Asp-324) interacts with Fe(3+). Zn(2+) is bound at residue Asp-324. Residues Asn-326 and Gly-328 each coordinate N-formimidoyl-L-glutamate. Ser-329 is a 4-imidazolone-5-propanoate binding site.

The protein belongs to the metallo-dependent hydrolases superfamily. HutI family. Zn(2+) serves as cofactor. It depends on Fe(3+) as a cofactor.

It is found in the cytoplasm. It catalyses the reaction 4-imidazolone-5-propanoate + H2O = N-formimidoyl-L-glutamate. The protein operates within amino-acid degradation; L-histidine degradation into L-glutamate; N-formimidoyl-L-glutamate from L-histidine: step 3/3. In terms of biological role, catalyzes the hydrolytic cleavage of the carbon-nitrogen bond in imidazolone-5-propanoate to yield N-formimidoyl-L-glutamate. It is the third step in the universal histidine degradation pathway. This is Imidazolonepropionase from Shewanella denitrificans (strain OS217 / ATCC BAA-1090 / DSM 15013).